Consider the following 271-residue polypeptide: Formamidopyrimidine-DNA glycosylase (271 aa).

The active-site Schiff-base intermediate with DNA is the Pro2. Glu3 (proton donor) is an active-site residue. The active-site Proton donor; for beta-elimination activity is Lys57. DNA contacts are provided by His90, Arg109, and Lys151. The FPG-type zinc finger occupies 236-270; the sequence is HVYGRGGETCTSCGNLLSEIRLGQRTTVFCGICQT. The active-site Proton donor; for delta-elimination activity is Arg260.

It belongs to the FPG family. Monomer. The cofactor is Zn(2+).

The enzyme catalyses Hydrolysis of DNA containing ring-opened 7-methylguanine residues, releasing 2,6-diamino-4-hydroxy-5-(N-methyl)formamidopyrimidine.. It carries out the reaction 2'-deoxyribonucleotide-(2'-deoxyribose 5'-phosphate)-2'-deoxyribonucleotide-DNA = a 3'-end 2'-deoxyribonucleotide-(2,3-dehydro-2,3-deoxyribose 5'-phosphate)-DNA + a 5'-end 5'-phospho-2'-deoxyribonucleoside-DNA + H(+). Functionally, involved in base excision repair of DNA damaged by oxidation or by mutagenic agents. Acts as a DNA glycosylase that recognizes and removes damaged bases. Has a preference for oxidized purines, such as 7,8-dihydro-8-oxoguanine (8-oxoG). Has AP (apurinic/apyrimidinic) lyase activity and introduces nicks in the DNA strand. Cleaves the DNA backbone by beta-delta elimination to generate a single-strand break at the site of the removed base with both 3'- and 5'-phosphates. The polypeptide is Formamidopyrimidine-DNA glycosylase (Shewanella sp. (strain W3-18-1)).